Consider the following 89-residue polypeptide: Small ribosomal subunit protein uS14 (89 aa).

This sequence belongs to the universal ribosomal protein uS14 family. Part of the 30S ribosomal subunit. Contacts proteins S3 and S10.

In terms of biological role, binds 16S rRNA, required for the assembly of 30S particles and may also be responsible for determining the conformation of the 16S rRNA at the A site. This chain is Small ribosomal subunit protein uS14, found in Chlorobium chlorochromatii (strain CaD3).